Here is a 533-residue protein sequence, read N- to C-terminus: uncharacterized protein (533 aa).

This is an uncharacterized protein from Clostridium beijerinckii (strain ATCC 51743 / NCIMB 8052) (Clostridium acetobutylicum).